We begin with the raw amino-acid sequence, 264 residues long: 3-methyl-2-oxobutanoate hydroxymethyltransferase (264 aa).

Mg(2+) is bound by residues aspartate 45 and aspartate 84. Residues 45-46, aspartate 84, and lysine 112 each bind 3-methyl-2-oxobutanoate; that span reads DS. Glutamate 114 provides a ligand contact to Mg(2+). Catalysis depends on glutamate 181, which acts as the Proton acceptor.

This sequence belongs to the PanB family. In terms of assembly, homodecamer; pentamer of dimers. Requires Mg(2+) as cofactor.

It localises to the cytoplasm. The enzyme catalyses 3-methyl-2-oxobutanoate + (6R)-5,10-methylene-5,6,7,8-tetrahydrofolate + H2O = 2-dehydropantoate + (6S)-5,6,7,8-tetrahydrofolate. It participates in cofactor biosynthesis; (R)-pantothenate biosynthesis; (R)-pantoate from 3-methyl-2-oxobutanoate: step 1/2. Its function is as follows. Catalyzes the reversible reaction in which hydroxymethyl group from 5,10-methylenetetrahydrofolate is transferred onto alpha-ketoisovalerate to form ketopantoate. In Photobacterium profundum (strain SS9), this protein is 3-methyl-2-oxobutanoate hydroxymethyltransferase.